A 1134-amino-acid polypeptide reads, in one-letter code: Tetrathionate reductase subunit A (1134 aa).

Positions 1–31 form a signal peptide, tat-type signal; sequence MQLSRRDFIKGLVAVGSASVFLAGYSETVDR. Residues 46 to 133 enclose the 4Fe-4S Mo/W bis-MGD-type domain; the sequence is GRIVHSACLG…DGIHYLYDPY (88 aa). Residues Cys-53, Cys-56, Cys-60, and Cys-119 each contribute to the [4Fe-4S] cluster site.

This sequence belongs to the prokaryotic molybdopterin-containing oxidoreductase family. As to quaternary structure, probably composed of three subunits: TtrA, TtrB and TtrC. Precursor interacts with TtrD. The cofactor is [4Fe-4S] cluster. Requires Mo-bis(molybdopterin guanine dinucleotide) as cofactor. Post-translationally, exported by the Tat system. The position of the signal peptide cleavage has not been experimentally proven.

It localises to the cell membrane. In terms of biological role, part of a membrane-bound tetrathionate reductase that catalyzes the reduction of tetrathionate to thiosulfate. TtrA is the catalytic subunit. This Archaeoglobus fulgidus (strain ATCC 49558 / DSM 4304 / JCM 9628 / NBRC 100126 / VC-16) protein is Tetrathionate reductase subunit A (ttrA).